A 178-amino-acid chain; its full sequence is MRKHLGGCWLAIVCVLLFSQLSSVKARGIKHRIKWNRKVLPSTSQVTEAHTAEIRPGAFIKQGRKLDINFGVEGNRYYEANYWQFPDGIHYNGCSEANVTKEKFVTSCINATQVANQEELSREKQDNKLYQRVLWQLIRELCSIKHCDFWLERGAGLQVTLDQPMMLCLLVFIWFIVK.

The first 25 residues, 1–25 (MRKHLGGCWLAIVCVLLFSQLSSVK), serve as a signal peptide directing secretion. The tract at residues 27-50 (RGIKHRIKWNRKVLPSTSQVTEAH) is flexible tail. The globular stretch occupies residues 51–154 (TAEIRPGAFI…KHCDFWLERG (104 aa)). 2 disulfides stabilise this stretch: Cys94–Cys147 and Cys108–Cys142. Residues Asn98 and Asn110 are each glycosylated (N-linked (GlcNAc...) asparagine). Positions 124–141 (KQDNKLYQRVLWQLIREL) are cu(2+) binding. Gly154 is lipidated: GPI-anchor amidated glycine. Residues 155–178 (AGLQVTLDQPMMLCLLVFIWFIVK) constitute a propeptide, removed in mature form.

The protein belongs to the prion family. Post-translationally, N-glycosylated. In terms of processing, O-glycosylated. As to expression, strongly expressed in testis. Detected at low levels in lymph node, spleen and ovary.

The protein resides in the cell membrane. Its function is as follows. Required for normal acrosome reaction and for normal male fertility. Can bind Cu(2+). In Ovis aries (Sheep), this protein is Prion-like protein doppel (PRND).